The following is a 279-amino-acid chain: Ethanolamine utilization protein EutJ (279 aa).

Belongs to the EutJ family.

Its pathway is amine and polyamine degradation; ethanolamine degradation. May protect ethanolamine ammonia-lyase (EAL, eutB-eutC) from inhibition, may function in assembling the bacterial microcompartment and/or in refolding EAL, suggesting it may have chaperone activity. Overexpression of eutJ and eutS in E.coli leads to multiple BMC-like structures; eutS expression alone leads to 1 BMC-like structure per cell. Its function is as follows. Expression of the eut operon allows this bacteria to use ethanolamine (EA) as a carbon, nitrogen and energy source. It relies on cobalamin (vitamin B12) both as a cofactor for the ethanolamine ammonia-lyase (EAL) activity and to induce the operon. EA enhances bacterial survival in macrophages in a concentration-dependent manner, suggesting it is an important nutrient during infection. This is Ethanolamine utilization protein EutJ from Salmonella typhimurium (strain LT2 / SGSC1412 / ATCC 700720).